The chain runs to 261 residues: Calbindin (261 aa).

Ala2 is subject to N-acetylalanine. Residues 2–7 are interaction with RANBP9; sequence AESHLQ. 5 EF-hand domains span residues 11–46, 53–88, 98–133, 142–177, and 186–221; these read ITAS…LLQA, ELSP…EENF, KSCE…LLEK, KLAE…QENF, and MCGK…LCEK. 5 residues coordinate Ca(2+): Asp24, Asp26, Ser28, Tyr30, and Glu35. 14 residues coordinate Ca(2+): Asp111, Asp113, Ser115, Glu122, Asp155, Asn157, Asp159, Lys161, Glu166, Asp199, Asp201, Asn203, Tyr205, and Glu210.

It belongs to the calbindin family. In terms of assembly, interacts with RANBP9. Expressed in the modiolar nerve root and in bushy neurons in the ventral cochlear nucleus (at protein level).

Its function is as follows. Buffers cytosolic calcium. May stimulate a membrane Ca(2+)-ATPase and a 3',5'-cyclic nucleotide phosphodiesterase. This chain is Calbindin (Calb1), found in Mus musculus (Mouse).